We begin with the raw amino-acid sequence, 276 residues long: Sulfur carrier protein FdhD (276 aa).

Cys118 serves as the catalytic Cysteine persulfide intermediate.

The protein belongs to the FdhD family.

The protein localises to the cytoplasm. Functionally, required for formate dehydrogenase (FDH) activity. Acts as a sulfur carrier protein that transfers sulfur from IscS to the molybdenum cofactor prior to its insertion into FDH. This Mycobacterium bovis (strain ATCC BAA-935 / AF2122/97) protein is Sulfur carrier protein FdhD.